Reading from the N-terminus, the 222-residue chain is Dense granule protein 3 (222 aa).

Helical transmembrane passes span 22-42 (LIPF…GGLA) and 162-182 (IPGY…RKVL). The Prevents secretion from ER motif lies at 219-222 (KKQT).

Homodimer. Interacts (via N-terminus) with human host CAMLG (via N-terminus).

It localises to the cytoplasm. It is found in the host endoplasmic reticulum. The protein resides in the parasitophorous vacuole membrane. In terms of biological role, direct host-parasite interaction occurs at the cytoplasmic faces of the parasitophorous vacuole membrane (PVM) and the host endoplasmic reticulum (ER) membrane via GRA3 and host CAMLG association. Direct insertion of GRA3 ER retrieval motif into the host ER membrane contributes to the host ER recruitment to the PVM. The chain is Dense granule protein 3 from Toxoplasma gondii.